Reading from the N-terminus, the 109-residue chain is UPF0060 membrane protein PA3275 (109 aa).

4 consecutive transmembrane segments (helical) span residues 5–25 (FWFV…YLWL), 27–47 (LGKS…FALL), 59–79 (AYAA…AFVE), and 84–104 (LWSD…VLFG).

The protein belongs to the UPF0060 family.

The protein resides in the cell inner membrane. The chain is UPF0060 membrane protein PA3275 from Pseudomonas aeruginosa (strain ATCC 15692 / DSM 22644 / CIP 104116 / JCM 14847 / LMG 12228 / 1C / PRS 101 / PAO1).